Reading from the N-terminus, the 690-residue chain is Polyribonucleotide nucleotidyltransferase (690 aa).

2 residues coordinate Mg(2+): D483 and D489. A KH domain is found at 550-609 (PKMEQITVDKKDIAAVIGKGGATIREIVEKSGAKLDVNDEGVVTVAAPDEESRNIAMQMI). The region spanning 619–686 (NKIYSGKVMK…DRGKVKLSMK (68 aa)) is the S1 motif domain.

The protein belongs to the polyribonucleotide nucleotidyltransferase family. Mg(2+) is required as a cofactor.

It localises to the cytoplasm. The enzyme catalyses RNA(n+1) + phosphate = RNA(n) + a ribonucleoside 5'-diphosphate. Functionally, involved in mRNA degradation. Catalyzes the phosphorolysis of single-stranded polyribonucleotides processively in the 3'- to 5'-direction. This chain is Polyribonucleotide nucleotidyltransferase, found in Pelagibacter ubique (strain HTCC1062).